The sequence spans 433 residues: Putative wall-associated receptor kinase-like 16 (433 aa).

Positions 1 to 22 are cleaved as a signal peptide; the sequence is MKLQHVVYLVAIFFVVAIFVIA. Residues 23 to 29 lie on the Extracellular side of the membrane; sequence CIEENKY. Residues 30–50 traverse the membrane as a helical segment; it reads LVWIMIILANTTNILSLVRSI. The Cytoplasmic segment spans residues 51–433; it reads SYIKNIRKHQ…VARFDIEAGR (383 aa). Thr-97 is subject to Phosphothreonine. One can recognise a Protein kinase domain in the interval 108 to 391; sequence YDVSRILGQG…RAKTTKHNWL (284 aa). Residues 114 to 122 and Lys-136 each bind ATP; that span reads LGQGGQWTV. A Phosphotyrosine modification is found at Tyr-181. The Proton acceptor role is filled by Asp-233. Phosphothreonine occurs at positions 267 and 272. The residue at position 280 (Tyr-280) is a Phosphotyrosine.

It belongs to the protein kinase superfamily. Ser/Thr protein kinase family.

The protein resides in the membrane. The enzyme catalyses L-seryl-[protein] + ATP = O-phospho-L-seryl-[protein] + ADP + H(+). It carries out the reaction L-threonyl-[protein] + ATP = O-phospho-L-threonyl-[protein] + ADP + H(+). Functionally, putative serine/threonine-protein kinase that may function as a signaling receptor of extracellular matrix component. The sequence is that of Putative wall-associated receptor kinase-like 16 (WAKL16) from Arabidopsis thaliana (Mouse-ear cress).